The chain runs to 458 residues: Smoothelin-like protein 2 (458 aa).

The stretch at 24–88 (LEGAVRALHE…RQVESLGLTT (65 aa)) forms a coiled coil. 3 disordered regions span residues 87-111 (TTGL…RAPR), 123-142 (FSLS…SELE), and 151-312 (IIEN…GAQA). Residues 94-104 (PGTPSPPPAPG) are compositionally biased toward pro residues. At threonine 96 the chain carries Phosphothreonine. Phosphoserine occurs at positions 98, 126, and 131. Over residues 131-142 (SLDHHDEASELE) the composition is skewed to basic and acidic residues. 2 stretches are compositionally biased toward low complexity: residues 158-167 (PGADPGDGPP) and 209-220 (TSATALSPTSAA). The segment covering 225–244 (LSSSPSEATTPWTPSPSEKN) has biased composition (polar residues). Over residues 245-254 (SSLPRSLSSS) the composition is skewed to low complexity. Phosphoserine is present on residues serine 252, serine 254, and serine 267. Pro residues predominate over residues 270-283 (LVTPPQSPPSPQPP). Threonine 272 carries the phosphothreonine modification. Serine 276 bears the Phosphoserine mark. Basic and acidic residues predominate over residues 290 to 299 (RPGERRRELV). Residues 300–310 (RSQTLPRTSGA) are compositionally biased toward polar residues. Residue serine 341 is modified to Phosphoserine. Positions 348–455 (SSIKQILLEW…YVQSLYNHLR (108 aa)) constitute a Calponin-homology (CH) domain.

The protein belongs to the smoothelin family.

This is Smoothelin-like protein 2 (SMTNL2) from Bos taurus (Bovine).